We begin with the raw amino-acid sequence, 81 residues long: ATP synthase subunit c (81 aa).

A run of 2 helical transmembrane segments spans residues 3–23 and 57–77; these read PLIAAASVVAAALAVGLGAIG and LAFMEALTIYGLVVSLVLLFA.

This sequence belongs to the ATPase C chain family. As to quaternary structure, F-type ATPases have 2 components, F(1) - the catalytic core - and F(0) - the membrane proton channel. F(1) has five subunits: alpha(3), beta(3), gamma(1), delta(1), epsilon(1). F(0) has four main subunits: a(1), b(1), b'(1) and c(10-14). The alpha and beta chains form an alternating ring which encloses part of the gamma chain. F(1) is attached to F(0) by a central stalk formed by the gamma and epsilon chains, while a peripheral stalk is formed by the delta, b and b' chains.

Its subcellular location is the cellular thylakoid membrane. In terms of biological role, f(1)F(0) ATP synthase produces ATP from ADP in the presence of a proton or sodium gradient. F-type ATPases consist of two structural domains, F(1) containing the extramembraneous catalytic core and F(0) containing the membrane proton channel, linked together by a central stalk and a peripheral stalk. During catalysis, ATP synthesis in the catalytic domain of F(1) is coupled via a rotary mechanism of the central stalk subunits to proton translocation. Its function is as follows. Key component of the F(0) channel; it plays a direct role in translocation across the membrane. A homomeric c-ring of between 10-14 subunits forms the central stalk rotor element with the F(1) delta and epsilon subunits. The protein is ATP synthase subunit c of Trichodesmium erythraeum (strain IMS101).